Here is a 62-residue protein sequence, read N- to C-terminus: Large ribosomal subunit protein bL28 (62 aa).

Positions 1 to 23 (MGKQCYVTGRKASTGNRRSHALN) are disordered.

This sequence belongs to the bacterial ribosomal protein bL28 family.

In Staphylococcus carnosus (strain TM300), this protein is Large ribosomal subunit protein bL28.